The primary structure comprises 481 residues: ATP synthase subunit alpha (481 aa).

Residue 145 to 152 (GDRQTGKT) coordinates ATP.

It belongs to the ATPase alpha/beta chains family. As to quaternary structure, F-type ATPases have 2 components, CF(1) - the catalytic core - and CF(0) - the membrane proton channel. CF(1) has five subunits: alpha(3), beta(3), gamma(1), delta(1), epsilon(1). CF(0) has three main subunits: a(1), b(2) and c(9-12). The alpha and beta chains form an alternating ring which encloses part of the gamma chain. CF(1) is attached to CF(0) by a central stalk formed by the gamma and epsilon chains, while a peripheral stalk is formed by the delta and b chains.

Its subcellular location is the cell membrane. It carries out the reaction ATP + H2O + 4 H(+)(in) = ADP + phosphate + 5 H(+)(out). In terms of biological role, produces ATP from ADP in the presence of a proton gradient across the membrane. The alpha chain is a regulatory subunit. This chain is ATP synthase subunit alpha, found in Carsonella ruddii (strain PV).